The sequence spans 274 residues: uncharacterized protein (274 aa).

The disordered stretch occupies residues 235-274; that stretch reads ETFDTQQDPKKTPETDKNAAYKGKEKKGKKEERGPRSIMK. A compositionally biased stretch (basic and acidic residues) spans 241 to 274; that stretch reads QDPKKTPETDKNAAYKGKEKKGKKEERGPRSIMK.

This is an uncharacterized protein from Treponema pallidum (strain Nichols).